An 884-amino-acid polypeptide reads, in one-letter code: Probable DNA-directed RNA polymerase subunit beta (884 aa).

Belongs to the RNA polymerase beta chain family.

It catalyses the reaction RNA(n) + a ribonucleoside 5'-triphosphate = RNA(n+1) + diphosphate. In terms of biological role, required for late and very late gene expression. May be a component of the novel RNA polymerase activity induced by baculovirus infection. This chain is Probable DNA-directed RNA polymerase subunit beta (LEF-8), found in Orgyia pseudotsugata multicapsid polyhedrosis virus (OpMNPV).